A 288-amino-acid chain; its full sequence is Diaminopimelate epimerase (288 aa).

Substrate is bound by residues Asn-14 and Asn-67. Cys-76 functions as the Proton donor in the catalytic mechanism. Substrate-binding positions include 77 to 78, Asn-166, Asn-199, and 217 to 218; these read GN and ER. Residue Cys-226 is the Proton acceptor of the active site. Substrate is bound at residue 227 to 228; the sequence is GT.

This sequence belongs to the diaminopimelate epimerase family. As to quaternary structure, homodimer.

It is found in the cytoplasm. It catalyses the reaction (2S,6S)-2,6-diaminopimelate = meso-2,6-diaminopimelate. It functions in the pathway amino-acid biosynthesis; L-lysine biosynthesis via DAP pathway; DL-2,6-diaminopimelate from LL-2,6-diaminopimelate: step 1/1. Its function is as follows. Catalyzes the stereoinversion of LL-2,6-diaminopimelate (L,L-DAP) to meso-diaminopimelate (meso-DAP), a precursor of L-lysine and an essential component of the bacterial peptidoglycan. The chain is Diaminopimelate epimerase from Bacillus cereus (strain AH820).